Consider the following 443-residue polypeptide: Protoheme IX farnesyltransferase, mitochondrial (443 aa).

The interval 68–113 is disordered; sequence LSQRVKPKPEPPASPFLEHTSSGQARADEDELPSFPAPSRPLSRKP. 7 helical membrane-spanning segments follow: residues 174 to 194, 230 to 250, 252 to 272, 286 to 306, 308 to 328, 363 to 383, and 410 to 430; these read AGFALAPGPFDWSCFLLTSLG, ISPLLAVSFATCCAVPGVALL, WGVNPLTGALGVFNIFLYTCC, VGAVVGAIPPVMGWTAATGSL, AGALLLGGILYSWQFPHFNAL, LIALSTAAPVLDITTWVFPVI, and LFFCSLWHLPLLLLLMLTCKQ.

It belongs to the UbiA prenyltransferase family.

It localises to the mitochondrion membrane. It catalyses the reaction heme b + (2E,6E)-farnesyl diphosphate + H2O = Fe(II)-heme o + diphosphate. Functionally, converts protoheme IX and farnesyl diphosphate to heme O. The polypeptide is Protoheme IX farnesyltransferase, mitochondrial (Cox10) (Mus musculus (Mouse)).